The chain runs to 982 residues: E3 ubiquitin-protein ligase CBL-B (982 aa).

The segment at 35-167 is 4H; that stretch reads PPKQAAADRR…KAIFPNGQFQ (133 aa). In terms of domain architecture, Cbl-PTB spans 35–343; the sequence is PPKQAAADRR…GRSYNPDLTG (309 aa). Residues 168–240 form an EF-hand-like region; that stretch reads GDNFRITKAD…FEFDIFTRLF (73 aa). D221, T223, N225, Y227, and E232 together coordinate Ca(2+). Residues 241 to 343 form an SH2-like region; that stretch reads QPWGSILRNW…GRSYNPDLTG (103 aa). The residue at position 282 (S282) is a Phosphoserine; by PKC/PRKCQ. Position 286 (R286) interacts with 4-O-phospho-L-tyrosine. The linker stretch occupies residues 344-372; it reads LCEPTPHDHIKVTQEQYELYCEMGSTFQL. Position 363 is a phosphotyrosine (Y363). The segment at 373-412 adopts an RING-type zinc-finger fold; the sequence is CKICAENDKDVKIEPCGHLMCTSCLTAWQESDGQGCPFCR. Residues 465-588 are disordered; that stretch reads ASVRKCTDRQ…SVPSRDQPMP (124 aa). The segment covering 473–486 has biased composition (polar residues); it reads RQNSPVTSPGSSPL. 6 positions are modified to phosphoserine: S476, S480, S484, S521, S525, and S529. Residues 543 to 567 form an interaction with VAV1 region; that stretch reads PLPAPPPPLRDPPPPPERPPPIPPD. The segment covering 544–566 has biased composition (pro residues); the sequence is LPAPPPPLRDPPPPPERPPPIPP. The residue at position 633 (S633) is a Phosphoserine. 2 positions are modified to phosphotyrosine: Y664 and Y708. Disordered regions lie at residues 702 to 723 and 745 to 929; these read EDDD…SQPS and THGA…EAAL. Over residues 714–723 the composition is skewed to polar residues; the sequence is HPVSLNSQPS. Over residues 819-828 the composition is skewed to pro residues; it reads PSLPPPPPPA. The span at 838-848 shows a compositional bias: low complexity; sequence PPGSSSRPSSG. Residues 884–899 show a composition bias toward polar residues; it reads RASQDYDQLPSSSDGS. At Y889 the chain carries Phosphotyrosine. The interaction with SH3KBP1 stretch occupies residues 891–927; that stretch reads QLPSSSDGSQAPARPPKPRPRRTAPEIHHRKPHGPEA. Positions 906–922 are enriched in basic residues; it reads PKPRPRRTAPEIHHRKP. Residues 931 to 970 enclose the UBA domain; sequence NVDAKIAKLMGEGYAFEEVKRALEIAQNNVEVARSILREF.

In terms of assembly, interacts with SH3 domain-containing proteins LCK, CRK and SORBS1. Interacts with LCP2 and ZAP70. Interacts with CBL. Interacts with SH3 domain-containing proteins VAV1, FYN, FGR, PLCG1, GRB2, CRKL, PIK3R1 and SH3KBP1/CIN85. Identified in heterotrimeric complexes with SH3KBP1/CIN85, CD2AP and ARHGEF7, where one CBLB peptide binds two copies of the other protein. Interacts with poly-ubiquitinated proteins. Dimerization is required for the binding of poly-ubiquitin, but not for the binding of mono-ubiquitin. Interacts with EGFR (phosphorylated). Interacts with IFT20. Phosphorylated on tyrosine and serine residues upon TCR or BCR activation. Phosphorylated on Tyr-664 and Tyr-708 in adipocytes following insulin stimulation. In terms of processing, auto-ubiquitinated upon EGF-mediated cell activation or upon T-cell costimulation by CD28; which promotes proteasomal degradation.

It is found in the cytoplasm. The enzyme catalyses S-ubiquitinyl-[E2 ubiquitin-conjugating enzyme]-L-cysteine + [acceptor protein]-L-lysine = [E2 ubiquitin-conjugating enzyme]-L-cysteine + N(6)-ubiquitinyl-[acceptor protein]-L-lysine.. The protein operates within protein modification; protein ubiquitination. Functionally, E3 ubiquitin-protein ligase which accepts ubiquitin from specific E2 ubiquitin-conjugating enzymes, and transfers it to substrates, generally promoting their degradation by the proteasome. Negatively regulates TCR (T-cell receptor), BCR (B-cell receptor) and FCER1 (high affinity immunoglobulin epsilon receptor) signal transduction pathways. In naive T-cells, inhibits VAV1 activation upon TCR engagement and imposes a requirement for CD28 costimulation for proliferation and IL-2 production. Also acts by promoting PIK3R1/p85 ubiquitination, which impairs its recruitment to the TCR and subsequent activation. In activated T-cells, inhibits PLCG1 activation and calcium mobilization upon restimulation and promotes anergy. In B-cells, acts by ubiquitinating SYK and promoting its proteasomal degradation. Slightly promotes SRC ubiquitination. May be involved in EGFR ubiquitination and internalization. May be functionally coupled with the E2 ubiquitin-protein ligase UB2D3. In association with CBL, required for proper feedback inhibition of ciliary platelet-derived growth factor receptor-alpha (PDGFRA) signaling pathway via ubiquitination and internalization of PDGFRA. This Mus musculus (Mouse) protein is E3 ubiquitin-protein ligase CBL-B (Cblb).